The primary structure comprises 181 residues: Adenylyl-sulfate kinase (181 aa).

12–19 (GLSGAGKS) is an ATP binding site. The active-site Phosphoserine intermediate is Ser86.

The protein belongs to the APS kinase family.

It carries out the reaction adenosine 5'-phosphosulfate + ATP = 3'-phosphoadenylyl sulfate + ADP + H(+). It functions in the pathway sulfur metabolism; hydrogen sulfide biosynthesis; sulfite from sulfate: step 2/3. In terms of biological role, catalyzes the synthesis of activated sulfate. The protein is Adenylyl-sulfate kinase of Microcystis aeruginosa (strain NIES-843 / IAM M-2473).